The sequence spans 122 residues: Fluoride-specific ion channel FluC 2 (122 aa).

Transmembrane regions (helical) follow at residues 3–23, 38–58, 62–82, and 93–113; these read ITAI…RMFI, TSIV…LNLT, LLLL…SFIY, and FMHL…CFYL. Na(+)-binding residues include glycine 72 and serine 75.

The protein belongs to the fluoride channel Fluc/FEX (TC 1.A.43) family.

The protein resides in the cell inner membrane. It catalyses the reaction fluoride(in) = fluoride(out). With respect to regulation, na(+) is not transported, but it plays an essential structural role and its presence is essential for fluoride channel function. Its function is as follows. Fluoride-specific ion channel. Important for reducing fluoride concentration in the cell, thus reducing its toxicity. The chain is Fluoride-specific ion channel FluC 2 from Prochlorococcus marinus (strain MIT 9312).